Consider the following 381-residue polypeptide: Adaptive-response sensory kinase SasA (381 aa).

Positions M154–D367 constitute a Histidine kinase domain. H157 is subject to Phosphohistidine; by autocatalysis.

As to quaternary structure, homooligomerizes. Interacts with KaiC. Participates in the KaiBC complex, whose core is composed of a KaiC homohexamer and 6 KaiB.

The catalysed reaction is ATP + protein L-histidine = ADP + protein N-phospho-L-histidine.. Functionally, member of the two-component regulatory system SasA/RpaA involved in genome-wide circadian gene expression. One of several clock output pathways. Participates in the Kai clock protein complex, the main circadian regulator in cyanobacteria, via its interaction with KaiC. KaiC enhances the autophosphorylation activity of SasA, which then transfers its phosphate group to RpaA to activate it. In addition to its output function, recruits fold-shifted KaiB (KaiB(fs)) to KaiC to cooperatively form the KaiB(6):KaiC(6) complex (independent of SasA kinase activity). Required for robustness of the circadian rhythm of gene expression and is involved in clock output, also required for adaptation to light/dark cycles. In Prochlorococcus marinus (strain SARG / CCMP1375 / SS120), this protein is Adaptive-response sensory kinase SasA.